A 215-amino-acid polypeptide reads, in one-letter code: Pyrrolidone-carboxylate peptidase (215 aa).

Residues E80, C143, and H167 contribute to the active site.

Belongs to the peptidase C15 family. As to quaternary structure, homotetramer.

The protein resides in the cytoplasm. The catalysed reaction is Release of an N-terminal pyroglutamyl group from a polypeptide, the second amino acid generally not being Pro.. Its function is as follows. Removes 5-oxoproline from various penultimate amino acid residues except L-proline. The sequence is that of Pyrrolidone-carboxylate peptidase from Pectobacterium carotovorum subsp. carotovorum (strain PC1).